Reading from the N-terminus, the 539-residue chain is Transcription factor LG2 (539 aa).

The segment covering 115 to 125 (MRQQQQLHSGN) has biased composition (polar residues). 2 disordered regions span residues 115 to 140 (MRQQ…SAQN) and 181 to 246 (KPGL…KSRL). Low complexity-rich tracts occupy residues 126–137 (SQSVGSTTDSSS) and 192–205 (QQQH…QQQL). Residues 219–242 (TRKDGKSVDAKTERRLAQNREAAR) are compositionally biased toward basic and acidic residues. The region spanning 227 to 271 (DAKTERRLAQNREAARKSRLRKKAYVQNLETSRVRLQQIEQELQR) is the bZIP domain. The basic motif stretch occupies residues 229-249 (KTERRLAQNREAARKSRLRKK). A leucine-zipper region spans residues 255–269 (LETSRVRLQQIEQEL). The region spanning 292–506 (AAMFDMEYAR…RALSNLWSSR (215 aa)) is the DOG1 domain. The tract at residues 513-539 (GTESVSPTGTELQPMHNQPQQNQYSGF) is disordered.

It belongs to the bZIP family. Interacts with NPR1/NH1 and NPR3/NH3.

Its subcellular location is the nucleus. Its function is as follows. Transcriptional regulator involved in defense response. Acts as a transcriptional activator in vitro. This is Transcription factor LG2 from Oryza sativa subsp. japonica (Rice).